Reading from the N-terminus, the 307-residue chain is Phosphate import ATP-binding protein PstB (307 aa).

The segment at 1–30 (MSETTYTTTEDTDDTNSTDSMVGTTTGETD) is disordered. Positions 48–302 (LGVDDLDVYY…PQSERVEDYI (255 aa)) constitute an ABC transporter domain. Residue 80–87 (GPSGCGKS) coordinates ATP.

The protein belongs to the ABC transporter superfamily. Phosphate importer (TC 3.A.1.7) family. As to quaternary structure, the complex is composed of two ATP-binding proteins (PstB), two transmembrane proteins (PstC and PstA) and a solute-binding protein (PstS).

It localises to the cell membrane. The enzyme catalyses phosphate(out) + ATP + H2O = ADP + 2 phosphate(in) + H(+). Functionally, part of the ABC transporter complex PstSACB involved in phosphate import. Responsible for energy coupling to the transport system. The polypeptide is Phosphate import ATP-binding protein PstB (Haloquadratum walsbyi (strain DSM 16790 / HBSQ001)).